A 276-amino-acid chain; its full sequence is Dermonecrotic toxin LafSicTox-betaIE2 (276 aa).

His-5 is an active-site residue. Residues Glu-25 and Asp-27 each coordinate Mg(2+). The active-site Nucleophile is the His-41. 2 cysteine pairs are disulfide-bonded: Cys-45–Cys-51 and Cys-47–Cys-189. Position 85 (Asp-85) interacts with Mg(2+).

Belongs to the arthropod phospholipase D family. Class II subfamily. The cofactor is Mg(2+). As to expression, expressed by the venom gland.

It is found in the secreted. The catalysed reaction is an N-(acyl)-sphingosylphosphocholine = an N-(acyl)-sphingosyl-1,3-cyclic phosphate + choline. It catalyses the reaction an N-(acyl)-sphingosylphosphoethanolamine = an N-(acyl)-sphingosyl-1,3-cyclic phosphate + ethanolamine. It carries out the reaction a 1-acyl-sn-glycero-3-phosphocholine = a 1-acyl-sn-glycero-2,3-cyclic phosphate + choline. The enzyme catalyses a 1-acyl-sn-glycero-3-phosphoethanolamine = a 1-acyl-sn-glycero-2,3-cyclic phosphate + ethanolamine. Dermonecrotic toxins cleave the phosphodiester linkage between the phosphate and headgroup of certain phospholipids (sphingolipid and lysolipid substrates), forming an alcohol (often choline) and a cyclic phosphate. This toxin acts on sphingomyelin (SM). It may also act on ceramide phosphoethanolamine (CPE), lysophosphatidylcholine (LPC) and lysophosphatidylethanolamine (LPE), but not on lysophosphatidylserine (LPS), and lysophosphatidylglycerol (LPG). It acts by transphosphatidylation, releasing exclusively cyclic phosphate products as second products. Induces dermonecrosis, hemolysis, increased vascular permeability, edema, inflammatory response, and platelet aggregation. The sequence is that of Dermonecrotic toxin LafSicTox-betaIE2 from Loxosceles aff. spinulosa (strain GJB-2008) (Recluse spider).